The primary structure comprises 533 residues: Protein transport protein SEC9 (533 aa).

Disordered regions lie at residues 1 to 32 (MGFKKFFGIRPPEEDTPERNRDLLTEEGIATK), 68 to 184 (RPGA…MNAT), 200 to 246 (MAQD…KRAP), and 259 to 284 (PTNEDDDLNNSIHEGNEGLNGQGQAP). Positions 11 to 24 (PPEEDTPERNRDLL) are enriched in basic and acidic residues. The span at 92-102 (GNTSRVGQPQQ) shows a compositional bias: polar residues. Residues 157–172 (GGPGNPYGGSTAGAGT) show a composition bias toward gly residues. Positions 227–240 (RPQAAAETPRPQAA) are enriched in low complexity. T-SNARE coiled-coil homology domains are found at residues 318–380 (RFTK…VAEL) and 470–532 (DEME…LTNI).

Belongs to the SNAP-25 family.

The sequence is that of Protein transport protein SEC9 (SEC9) from Eremothecium gossypii (strain ATCC 10895 / CBS 109.51 / FGSC 9923 / NRRL Y-1056) (Yeast).